The following is a 159-amino-acid chain: uncharacterized protein (159 aa).

Residues 7–151 form the N-acetyltransferase domain; the sequence is LLINYKTLEE…NPLVWHPASE (145 aa).

This is an uncharacterized protein from Bacillus licheniformis (strain ATCC 14580 / DSM 13 / JCM 2505 / CCUG 7422 / NBRC 12200 / NCIMB 9375 / NCTC 10341 / NRRL NRS-1264 / Gibson 46).